A 206-amino-acid polypeptide reads, in one-letter code: uncharacterized protein (206 aa).

A helical membrane pass occupies residues 21-43; that stretch reads VPINITMSICALTALLKSYSITG.

It localises to the membrane. This is an uncharacterized protein from Acanthamoeba polyphaga (Amoeba).